Here is a 121-residue protein sequence, read N- to C-terminus: Insertion element IS406 uncharacterized 13.3 kDa protein (121 aa).

The sequence is that of Insertion element IS406 uncharacterized 13.3 kDa protein from Burkholderia multivorans (strain ATCC 17616 / 249).